Here is a 576-residue protein sequence, read N- to C-terminus: Arginine--tRNA ligase (576 aa).

A 'HIGH' region motif is present at residues 122 to 132 (PNVAKEMHVGH).

This sequence belongs to the class-I aminoacyl-tRNA synthetase family. In terms of assembly, monomer.

It is found in the cytoplasm. It carries out the reaction tRNA(Arg) + L-arginine + ATP = L-arginyl-tRNA(Arg) + AMP + diphosphate. The chain is Arginine--tRNA ligase from Serratia proteamaculans (strain 568).